The following is a 278-amino-acid chain: UPF0761 membrane protein NT05HA_1801 (278 aa).

A run of 6 helical transmembrane segments spans residues 32–52 (MLAI…FPVF), 88–108 (QMSA…INSI), 123–143 (PIFT…LLVG), 168–188 (LLSF…YMVV), 203–223 (LIAA…IVTF), and 232–252 (AMAT…FVLL).

Belongs to the UPF0761 family.

It is found in the cell inner membrane. The chain is UPF0761 membrane protein NT05HA_1801 from Aggregatibacter aphrophilus (strain NJ8700) (Haemophilus aphrophilus).